The primary structure comprises 412 residues: Thyroxine-binding globulin (412 aa).

The N-terminal stretch at 1-16 is a signal peptide; sequence MPLFFSLVLLILGLHC. Residues asparagine 35, asparagine 98, asparagine 164, and asparagine 252 are each glycosylated (N-linked (GlcNAc...) asparagine). Thyroxine contacts are provided by asparagine 292 and lysine 395.

Belongs to the serpin family. In terms of tissue distribution, expressed by the liver and secreted in plasma.

It is found in the secreted. Major thyroid hormone transport protein in serum. The protein is Thyroxine-binding globulin (SERPINA7) of Ovis aries (Sheep).